Reading from the N-terminus, the 364-residue chain is L-carnitine dehydrogenase (364 aa).

Position 11–16 (11–16 (GGGVIG)) interacts with NAD(+). Residues 336 to 364 (KPAASTAAEKAKASKPVKKAEKPKKKKKG) form a disordered region. A compositionally biased stretch (basic residues) spans 348-364 (ASKPVKKAEKPKKKKKG).

Belongs to the 3-hydroxyacyl-CoA dehydrogenase family. L-carnitine dehydrogenase subfamily. In terms of assembly, homodimer.

It is found in the cytoplasm. The catalysed reaction is carnitine + NAD(+) = 3-dehydrocarnitine + NADH + H(+). Its pathway is amine and polyamine metabolism; carnitine metabolism. In terms of biological role, catalyzes the NAD(+)-dependent oxidation of L-carnitine to 3-dehydrocarnitine. In Mesorhizobium japonicum (strain LMG 29417 / CECT 9101 / MAFF 303099) (Mesorhizobium loti (strain MAFF 303099)), this protein is L-carnitine dehydrogenase.